The primary structure comprises 307 residues: MVEQSKVPSSSLCPPDKIIFDEERGEYICTETGEVIEERIIDQGPEWRAFTPEEKEKRSRVGGPLNQTIHDMGISTVIDWKDKDAMGRSLDPKRRLEVLRWRKWQIRTRIQSSIDRNLAQAMNELERIGNLLNLPKAVKDEAALIYRKAVEKGLVRGRSIESVVAASIYAACRRMKMARTLDEIAQFTKANRKEVARCYRLILRELDIEVPVSDPKDYVTRIGTLLSLSGITMKHAAEIIEKAKNSGLTAGKDPAGLAAAAIYIAALLNDERRTQKEIAQVAGVTEVTVRNRYKELTQELKIQIPSQ.

Tandem repeats lie at residues 123–206 and 217–298.

The protein belongs to the TFIIB family.

Functionally, stabilizes TBP binding to an archaeal box-A promoter. Also responsible for recruiting RNA polymerase II to the pre-initiation complex (DNA-TBP-TFIIB). This is Transcription initiation factor IIB from Sulfolobus acidocaldarius (strain ATCC 33909 / DSM 639 / JCM 8929 / NBRC 15157 / NCIMB 11770).